A 102-amino-acid polypeptide reads, in one-letter code: Probable endoribonuclease MazF2 (102 aa).

This sequence belongs to the PemK/MazF family. As to quaternary structure, forms a complex with cognate antitoxin MazE2.

In terms of biological role, toxic component of a type II toxin-antitoxin (TA) system. Acts as an endoribonuclease. Neutralized by coexpression with cognate antitoxin MazE2. This is Probable endoribonuclease MazF2 (mazF2) from Mycobacterium tuberculosis (strain CDC 1551 / Oshkosh).